Reading from the N-terminus, the 699-residue chain is Elongation factor G (699 aa).

The region spanning 10-292 is the tr-type G domain; the sequence is NRTRNIGIMA…AVIDYLPSPT (283 aa). Residues 19-26, 90-94, and 144-147 each bind GTP; these read AHIDAGKT, DTPGH, and NKMD. The tract at residues 292–312 is disordered; that stretch reads TDVPAIRGEEDDGSEGSRSAS.

It belongs to the TRAFAC class translation factor GTPase superfamily. Classic translation factor GTPase family. EF-G/EF-2 subfamily.

It localises to the cytoplasm. Functionally, catalyzes the GTP-dependent ribosomal translocation step during translation elongation. During this step, the ribosome changes from the pre-translocational (PRE) to the post-translocational (POST) state as the newly formed A-site-bound peptidyl-tRNA and P-site-bound deacylated tRNA move to the P and E sites, respectively. Catalyzes the coordinated movement of the two tRNA molecules, the mRNA and conformational changes in the ribosome. In Coxiella burnetii (strain CbuG_Q212) (Coxiella burnetii (strain Q212)), this protein is Elongation factor G.